Consider the following 47-residue polypeptide: Fasciclin-like arabinogalactan protein (47 aa).

The 47-residue stretch at 1-47 (APTPATLNGLTIFAPNDEAFKATGVPDLSKLSNAPMVSLLQYHAAAR) folds into the FAS1 domain.

The protein belongs to the fasciclin-like AGP family.

In terms of biological role, may be a cell surface adhesion protein. The polypeptide is Fasciclin-like arabinogalactan protein (Jatropha curcas (Barbados nut)).